The primary structure comprises 107 residues: Small ribosomal subunit protein bS16 (107 aa).

Positions 85–107 are disordered; it reads REARNNPEKAVPRKERKAAEAGK.

This sequence belongs to the bacterial ribosomal protein bS16 family.

The protein is Small ribosomal subunit protein bS16 of Rhodopseudomonas palustris (strain BisB5).